The primary structure comprises 342 residues: Outer membrane porin C (342 aa).

This sequence belongs to the Gram-negative porin family. In terms of assembly, homotrimer.

The protein resides in the cell outer membrane. Its function is as follows. Forms pores that allow passive diffusion of small molecules across the outer membrane. In R.aquatilis OmpC is involved in the adhesion to wheat roots. In Rahnella aquatilis, this protein is Outer membrane porin C (ompC).